We begin with the raw amino-acid sequence, 127 residues long: Large ribosomal subunit protein uL18 (127 aa).

The protein belongs to the universal ribosomal protein uL18 family. In terms of assembly, part of the 50S ribosomal subunit; part of the 5S rRNA/L5/L18/L25 subcomplex. Contacts the 5S and 23S rRNAs.

This is one of the proteins that bind and probably mediate the attachment of the 5S RNA into the large ribosomal subunit, where it forms part of the central protuberance. The protein is Large ribosomal subunit protein uL18 of Streptomyces griseus subsp. griseus (strain JCM 4626 / CBS 651.72 / NBRC 13350 / KCC S-0626 / ISP 5235).